A 124-amino-acid polypeptide reads, in one-letter code: Fluoride-specific ion channel FluC (124 aa).

4 helical membrane-spanning segments follow: residues 4–24, 35–55, 60–80, and 102–122; these read LLLVALGGSIGAVFRYLISIF, FGTLLVNVLGSFLMGVIYALG, ISPEFKALIGVGLLGALTTFS, and VVLNLSLCLFMVYLGQQLVFS. Residues Gly74 and Thr77 each contribute to the Na(+) site.

It belongs to the fluoride channel Fluc/FEX (TC 1.A.43) family.

The protein resides in the cell inner membrane. The enzyme catalyses fluoride(in) = fluoride(out). With respect to regulation, na(+) is not transported, but it plays an essential structural role and its presence is essential for fluoride channel function. Functionally, fluoride-specific ion channel. Important for reducing fluoride concentration in the cell, thus reducing its toxicity. The protein is Fluoride-specific ion channel FluC of Shewanella oneidensis (strain ATCC 700550 / JCM 31522 / CIP 106686 / LMG 19005 / NCIMB 14063 / MR-1).